Consider the following 200-residue polypeptide: Coiled-coil domain-containing protein 85B (200 aa).

Residues 57–84 are a coiled coil; sequence LQGHLLEIRELKVINQRLQEENQELRDL. A compositionally biased stretch (low complexity) spans 178-188; sequence DGSSSTGSVGS. A disordered region spans residues 178 to 200; the sequence is DGSSSTGSVGSPDQLHLVCSPDD.

This sequence belongs to the CCDC85 family.

The protein resides in the nucleus. It is found in the cytoplasm. Its subcellular location is the cytoskeleton. The protein localises to the microtubule organizing center. It localises to the centrosome. The protein resides in the cell junction. It is found in the adherens junction. Functions as a transcriptional repressor. May inhibit the activity of CTNNB1 in a TP53-dependent manner and thus regulate cell growth. May function in adipocyte differentiation, negatively regulating mitotic clonal expansion. Plays a role in cell-cell adhesion and epithelium development through its interaction with proteins of the beta-catenin family. This chain is Coiled-coil domain-containing protein 85B (ccdc85b), found in Danio rerio (Zebrafish).